Reading from the N-terminus, the 445-residue chain is UPF0210 protein SPT_0285 (445 aa).

The protein belongs to the UPF0210 family. In terms of assembly, homodimer.

The polypeptide is UPF0210 protein SPT_0285 (Streptococcus pneumoniae (strain Taiwan19F-14)).